Here is a 317-residue protein sequence, read N- to C-terminus: MKVLWVALVITLLAGCQAEEVKPAPEPEVQLGQEWPGWQGSQPWEQALGRFWDYLRWVQTLSDQVQEELLSTQVIQELTVLMDETMKEVKAYREELEEQLGPVAQETQARVSKELQAAQARLASDMQDVRGRLAQYRSEVQAMMGHTTDELRDRLASHLRKLRKRLLRDAEDLQKRLAVYRAGALEGSERSVSAIRERLGPLVEQGRARAATVGTLASQTLRERAEAWHQKLRGRVEEMGTQARDHLEEMREQLDEVRAKVEEQGTQMRLQAEAFQARLKSWFEPLVEDMQRQWAGLVEKVQLAMATSSTSAPSENH.

A signal peptide spans 1–18 (MKVLWVALVITLLAGCQA). 8 consecutive repeat copies span residues 80-101 (VLMD…EQLG), 102-123 (PVAQ…ARLA), 124-145 (SDMQ…AMMG), 146-167 (HTTD…KRLL), 168-189 (RDAE…EGSE), 190-211 (RSVS…ARAA), 212-233 (TVGT…QKLR), and 234-255 (GRVE…EQLD). The segment at 80–255 (VLMDETMKEV…HLEEMREQLD (176 aa)) is 8 X 22 AA approximate tandem repeats. Position 143 is a methionine sulfoxide (methionine 143). The segment at 158–168 (HLRKLRKRLLR) is LDL and other lipoprotein receptors binding. 162–165 (LRKR) is a binding site for heparin. The interval 210–290 (AATVGTLASQ…SWFEPLVEDM (81 aa)) is lipid-binding and lipoprotein association. 229–236 (HQKLRGRV) is a heparin binding site. A homooligomerization region spans residues 266–317 (TQMRLQAEAFQARLKSWFEPLVEDMQRQWAGLVEKVQLAMATSSTSAPSENH). The interval 278 to 290 (RLKSWFEPLVEDM) is specificity for association with VLDL.

This sequence belongs to the apolipoprotein A1/A4/E family. In terms of assembly, homotetramer. May interact with ABCA1; functionally associated with ABCA1 in the biogenesis of HDLs. May interact with APP/A4 amyloid-beta peptide; the interaction is extremely stable in vitro but its physiological significance is unclear. May interact with MAPT. May interact with MAP2. In the cerebrospinal fluid, interacts with secreted SORL1. Interacts with PMEL; this allows the loading of PMEL luminal fragment on ILVs to induce fibril nucleation. Post-translationally, APOE exists as multiple glycosylated and sialylated glycoforms within cells and in plasma. The extent of glycosylation and sialylation are tissue and context specific. Glycated in plasma VLDL. In terms of processing, phosphorylated by FAM20C in the extracellular medium.

The protein resides in the secreted. It is found in the extracellular space. Its subcellular location is the extracellular matrix. The protein localises to the extracellular vesicle. It localises to the endosome. The protein resides in the multivesicular body. APOE is an apolipoprotein, a protein associating with lipid particles, that mainly functions in lipoprotein-mediated lipid transport between organs via the plasma and interstitial fluids. APOE is a core component of plasma lipoproteins and is involved in their production, conversion and clearance. Apolipoproteins are amphipathic molecules that interact both with lipids of the lipoprotein particle core and the aqueous environment of the plasma. As such, APOE associates with chylomicrons, chylomicron remnants, very low density lipoproteins (VLDL) and intermediate density lipoproteins (IDL) but shows a preferential binding to high-density lipoproteins (HDL). It also binds a wide range of cellular receptors including the LDL receptor/LDLR and the very low-density lipoprotein receptor/VLDLR that mediate the cellular uptake of the APOE-containing lipoprotein particles. Finally, APOE also has a heparin-binding activity and binds heparan-sulfate proteoglycans on the surface of cells, a property that supports the capture and the receptor-mediated uptake of APOE-containing lipoproteins by cells. In Physeter macrocephalus (Sperm whale), this protein is Apolipoprotein E (APOE).